Consider the following 381-residue polypeptide: Early boundary activity protein 2 (381 aa).

The interval 210 to 245 (NDAEDVPAPPSKRPRHMSTSSSESHIPDTASEKDEK) is disordered. Residues 268 to 365 (PNGTQITAHQ…TKCADTAKKY (98 aa)) enclose the BEN domain.

As to quaternary structure, the heterotrimeric Elba complex consists of Elba1, Elba2 and Elba3.

It localises to the nucleus. The heterotrimeric Elba complex is required for chromatin domain boundary function during early embryogenesis. It binds to a 8-bp sequence 5'-CCAATAAG-3' in the Fab-7 insulator or boundary element in the bithorax complex and contributes to its insulator or boundary activity. Elba2 can act as a transcriptional repressor and binds the palindromic sequence 5'-CCAATTGG-3' to mediate transcriptional repression. The polypeptide is Early boundary activity protein 2 (Drosophila melanogaster (Fruit fly)).